The following is a 255-amino-acid chain: Hydroxyacylglutathione hydrolase (255 aa).

H52, H54, D56, H57, H109, D126, and H166 together coordinate Zn(2+).

Belongs to the metallo-beta-lactamase superfamily. Glyoxalase II family. In terms of assembly, monomer. Zn(2+) serves as cofactor.

It catalyses the reaction an S-(2-hydroxyacyl)glutathione + H2O = a 2-hydroxy carboxylate + glutathione + H(+). It participates in secondary metabolite metabolism; methylglyoxal degradation; (R)-lactate from methylglyoxal: step 2/2. Functionally, thiolesterase that catalyzes the hydrolysis of S-D-lactoyl-glutathione to form glutathione and D-lactic acid. This Anaeromyxobacter dehalogenans (strain 2CP-C) protein is Hydroxyacylglutathione hydrolase.